The following is a 163-amino-acid chain: Bacterial microcompartment assembly protein PduM (163 aa).

Belongs to the PduM family. Interacts with shell protein PduK.

The protein localises to the bacterial microcompartment. The protein operates within polyol metabolism; 1,2-propanediol degradation. Its function is as follows. Plays an essential role in assembly and/or stability of the bacterial microcompartment (BMC) dedicated to 1,2-propanediol (1,2-PD) degradation. Expression of a cosmid containing the full 21-gene pdu operon in E.coli allows E.coli to grow on 1,2-propanediol (1,2-PD) with the appearance of bacterial microcompartments (BMC) in its cytoplasm. Functionally, the 1,2-PD-specific bacterial microcompartment (BMC) concentrates low levels of 1,2-PD catabolic enzymes, concentrates volatile reaction intermediates thus enhancing pathway flux and keeps the level of toxic, mutagenic propionaldehyde low. This Citrobacter freundii protein is Bacterial microcompartment assembly protein PduM.